A 292-amino-acid polypeptide reads, in one-letter code: RWD domain-containing protein 2A (292 aa).

In terms of domain architecture, RWD spans 14-134 (LEMEMLFSMF…QWLQDNSASY (121 aa)).

This is RWD domain-containing protein 2A (RWDD2A) from Homo sapiens (Human).